Consider the following 468-residue polypeptide: COBRA-like protein 5 (468 aa).

A signal peptide spans 1-22; it reads MELHRCSLLALLLAVTCSVAVA. N-linked (GlcNAc...) asparagine glycosylation is found at Asn-31, Asn-156, Asn-164, and Asn-228. A disordered region spans residues 251 to 278; sequence GGGKNARAGDGRSRRNSGGGGGHSGGTE. Asn-340, Asn-355, and Asn-374 each carry an N-linked (GlcNAc...) asparagine glycan. A lipid anchor (GPI-anchor amidated asparagine) is attached at Asn-443. The propeptide at 444–468 is removed in mature form; sequence SAPIGPPRSVAAAASAILVVLLLVA.

The protein belongs to the COBRA family. In terms of tissue distribution, expressed mainly in developing sclerenchyma cells and in vascular bundles.

The protein localises to the cell membrane. Functionally, involved in determining the orientation of cell expansion, probably by playing an important role in cellulose deposition. May act by recruiting cellulose synthesizing complexes to discrete positions on the cell surface. This Oryza sativa subsp. indica (Rice) protein is COBRA-like protein 5 (BC1).